Reading from the N-terminus, the 338-residue chain is Glyceraldehyde-3-phosphate dehydrogenase (338 aa).

Residues 12–13, D34, and R80 contribute to the NAD(+) site; that span reads RI. D-glyceraldehyde 3-phosphate-binding positions include 151 to 153, T182, 211 to 212, and R234; these read SCT and TG. The Nucleophile role is filled by C152. N316 is an NAD(+) binding site.

It belongs to the glyceraldehyde-3-phosphate dehydrogenase family. As to quaternary structure, homotetramer.

It is found in the cytoplasm. It carries out the reaction D-glyceraldehyde 3-phosphate + phosphate + NAD(+) = (2R)-3-phospho-glyceroyl phosphate + NADH + H(+). It functions in the pathway carbohydrate degradation; glycolysis; pyruvate from D-glyceraldehyde 3-phosphate: step 1/5. The protein is Glyceraldehyde-3-phosphate dehydrogenase (GPD) of Paracoccidioides lutzii (strain ATCC MYA-826 / Pb01) (Paracoccidioides brasiliensis).